A 100-amino-acid chain; its full sequence is Urease subunit gamma (100 aa).

Belongs to the urease gamma subunit family. In terms of assembly, heterotrimer of UreA (gamma), UreB (beta) and UreC (alpha) subunits. Three heterotrimers associate to form the active enzyme.

The protein resides in the cytoplasm. The catalysed reaction is urea + 2 H2O + H(+) = hydrogencarbonate + 2 NH4(+). The protein operates within nitrogen metabolism; urea degradation; CO(2) and NH(3) from urea (urease route): step 1/1. This chain is Urease subunit gamma, found in Trichormus variabilis (strain ATCC 29413 / PCC 7937) (Anabaena variabilis).